The sequence spans 320 residues: Fructose-1,6-bisphosphatase class 1 (320 aa).

Glu-105, Asp-124, Leu-126, and Asp-127 together coordinate Mg(2+). Substrate-binding positions include 127–130, Tyr-233, and Lys-263; that span reads DGSS. A Mg(2+)-binding site is contributed by Glu-269.

The protein belongs to the FBPase class 1 family. As to quaternary structure, homotetramer. Mg(2+) is required as a cofactor.

It is found in the cytoplasm. It catalyses the reaction beta-D-fructose 1,6-bisphosphate + H2O = beta-D-fructose 6-phosphate + phosphate. It functions in the pathway carbohydrate biosynthesis; gluconeogenesis. The protein is Fructose-1,6-bisphosphatase class 1 of Methanocorpusculum labreanum (strain ATCC 43576 / DSM 4855 / Z).